A 123-amino-acid polypeptide reads, in one-letter code: UPF0102 protein PSHAa2523 (123 aa).

The protein belongs to the UPF0102 family.

This Pseudoalteromonas translucida (strain TAC 125) protein is UPF0102 protein PSHAa2523.